The following is a 227-amino-acid chain: Cytidylate kinase (227 aa).

10–18 provides a ligand contact to ATP; the sequence is GPSGSGKGT.

Belongs to the cytidylate kinase family. Type 1 subfamily.

Its subcellular location is the cytoplasm. The enzyme catalyses CMP + ATP = CDP + ADP. The catalysed reaction is dCMP + ATP = dCDP + ADP. The polypeptide is Cytidylate kinase (Acinetobacter baylyi (strain ATCC 33305 / BD413 / ADP1)).